The sequence spans 224 residues: tRNA (guanine-N(7)-)-methyltransferase (224 aa).

3 residues coordinate S-adenosyl-L-methionine: Glu57, Asp82, and Asp109. Asp167 is a substrate binding site.

The protein belongs to the class I-like SAM-binding methyltransferase superfamily. TrmB family.

The enzyme catalyses guanosine(46) in tRNA + S-adenosyl-L-methionine = N(7)-methylguanosine(46) in tRNA + S-adenosyl-L-homocysteine. It participates in tRNA modification; N(7)-methylguanine-tRNA biosynthesis. In terms of biological role, catalyzes the formation of N(7)-methylguanine at position 46 (m7G46) in tRNA. The chain is tRNA (guanine-N(7)-)-methyltransferase from Chloroflexus aggregans (strain MD-66 / DSM 9485).